The chain runs to 406 residues: Phosphopentomutase (406 aa).

Mn(2+) is bound by residues D10, D305, H310, D346, H347, and H358.

It belongs to the phosphopentomutase family. Requires Mn(2+) as cofactor.

The protein resides in the cytoplasm. The enzyme catalyses 2-deoxy-alpha-D-ribose 1-phosphate = 2-deoxy-D-ribose 5-phosphate. It catalyses the reaction alpha-D-ribose 1-phosphate = D-ribose 5-phosphate. It participates in carbohydrate degradation; 2-deoxy-D-ribose 1-phosphate degradation; D-glyceraldehyde 3-phosphate and acetaldehyde from 2-deoxy-alpha-D-ribose 1-phosphate: step 1/2. Functionally, isomerase that catalyzes the conversion of deoxy-ribose 1-phosphate (dRib-1-P) and ribose 1-phosphate (Rib-1-P) to deoxy-ribose 5-phosphate (dRib-5-P) and ribose 5-phosphate (Rib-5-P), respectively. This chain is Phosphopentomutase, found in Methylorubrum extorquens (strain PA1) (Methylobacterium extorquens).